Consider the following 642-residue polypeptide: Putative ATP-binding protein YdiF (642 aa).

2 consecutive ABC transporter domains span residues 4–259 (LQVN…EKDL) and 327–541 (LRVQ…ELEK). Residues 36 to 43 (GRNGAGKS) and 360 to 367 (GPNGIGKS) contribute to the ATP site. 2 stretches are compositionally biased toward basic and acidic residues: residues 541–550 (KMNQQEETDK) and 557–567 (SDSKRSYEEEK). A disordered region spans residues 541–567 (KMNQQEETDKTPATVKSDSKRSYEEEK).

Belongs to the ABC transporter superfamily. ABCF family. YdiF subfamily.

This chain is Putative ATP-binding protein YdiF (ydiF), found in Bacillus subtilis (strain 168).